A 48-amino-acid chain; its full sequence is Cuticle protein 5.1 (48 aa).

Component of the cuticle of migratory locust which contains more than 100 different structural proteins. This chain is Cuticle protein 5.1, found in Locusta migratoria (Migratory locust).